Here is a 95-residue protein sequence, read N- to C-terminus: MAERLSPADIEAQLANLPGWKQVGDRLEQTFTFKDFLGSIAFVNRLVDPAEQAGHHPDLSISWNRVTVCLTTHDVGGITQKDIDLAKVISNLAVV.

It belongs to the pterin-4-alpha-carbinolamine dehydratase family.

The enzyme catalyses (4aS,6R)-4a-hydroxy-L-erythro-5,6,7,8-tetrahydrobiopterin = (6R)-L-erythro-6,7-dihydrobiopterin + H2O. The polypeptide is Putative pterin-4-alpha-carbinolamine dehydratase (Thermosynechococcus vestitus (strain NIES-2133 / IAM M-273 / BP-1)).